Consider the following 239-residue polypeptide: Sugar fermentation stimulation protein homolog (239 aa).

It belongs to the SfsA family.

This is Sugar fermentation stimulation protein homolog from Caulobacter vibrioides (strain ATCC 19089 / CIP 103742 / CB 15) (Caulobacter crescentus).